Reading from the N-terminus, the 435-residue chain is Nuclear hormone receptor family member nhr-136 (435 aa).

Positions 50 to 129 (PSNCKVCRHS…AGMNPSAIQA (80 aa)) form a DNA-binding region, nuclear receptor. NR C4-type zinc fingers lie at residues 53–73 (CKVC…CNGC) and 89–112 (CLKM…CRAC). The NR LBD domain occupies 194-430 (RDIRKLDELI…RYTRISNLYE (237 aa)).

This sequence belongs to the nuclear hormone receptor family.

It is found in the nucleus. Orphan nuclear receptor. In Caenorhabditis elegans, this protein is Nuclear hormone receptor family member nhr-136 (nhr-136).